A 235-amino-acid polypeptide reads, in one-letter code: MSIENFPSLNSEEFTEACHHLDRQYCQAPLGSERARWKLRLCNALCTDFSYGGGFTTYVQIRRPLEFDLDHGDLSLDLDGFSFSDEKGPHVSIAEDKDMLDAEEADEAALIRQRARPEIAMVEYEIHLHPTYRVPCLWFTLRNLPADEPAFDVDTVFRRLVPDEYKAGLRTLGNVGGISADHHPITGVPSFFVHPCLLGDAISKFECDRTNYLMIWLGLVGGCVGLWVPKEMAMQ.

The active-site Glycyl thioester intermediate is the Cys196.

It belongs to the ATG10 family. Forms homooligomers. Interacts with ATG7 and ATG12.

Its subcellular location is the preautophagosomal structure membrane. Functionally, E2-like enzyme required for the cytoplasm to vacuole transport (Cvt), autophagy and nucleophagy. Acts as an E2-like enzyme that catalyzes the conjugation of ATG12 to ATG5. ATG12 conjugation to ATG5 is required for proper localization of ATG8 to the preautophagosomal structure (PAS). Likely serves as an ATG5-recognition molecule. Autophagy is required for proper vegetative growth, asexual/sexual reproduction, and full virulence. Autophagy is particularly involved in the biosynthesis of deoxynivalenol (DON), an important virulence determinant. The sequence is that of Ubiquitin-like-conjugating enzyme ATG10 from Gibberella zeae (strain ATCC MYA-4620 / CBS 123657 / FGSC 9075 / NRRL 31084 / PH-1) (Wheat head blight fungus).